We begin with the raw amino-acid sequence, 513 residues long: ATP synthase subunit alpha (513 aa).

169 to 176 (GDRQIGKS) lines the ATP pocket.

It belongs to the ATPase alpha/beta chains family. F-type ATPases have 2 components, CF(1) - the catalytic core - and CF(0) - the membrane proton channel. CF(1) has five subunits: alpha(3), beta(3), gamma(1), delta(1), epsilon(1). CF(0) has three main subunits: a(1), b(2) and c(9-12). The alpha and beta chains form an alternating ring which encloses part of the gamma chain. CF(1) is attached to CF(0) by a central stalk formed by the gamma and epsilon chains, while a peripheral stalk is formed by the delta and b chains.

The protein localises to the cell inner membrane. It catalyses the reaction ATP + H2O + 4 H(+)(in) = ADP + phosphate + 5 H(+)(out). In terms of biological role, produces ATP from ADP in the presence of a proton gradient across the membrane. The alpha chain is a regulatory subunit. This Colwellia psychrerythraea (strain 34H / ATCC BAA-681) (Vibrio psychroerythus) protein is ATP synthase subunit alpha.